We begin with the raw amino-acid sequence, 375 residues long: tRNA-specific 2-thiouridylase MnmA (375 aa).

ATP is bound by residues Gly16–Ser23 and Met42. The interval Asn102 to Asp104 is interaction with target base in tRNA. Cys107 serves as the catalytic Nucleophile. Cys107 and Cys203 are disulfide-bonded. Gly131 contributes to the ATP binding site. The interaction with tRNA stretch occupies residues Lys153–Gln155. The Cysteine persulfide intermediate role is filled by Cys203. Residues Arg315 to Tyr316 form an interaction with tRNA region.

The protein belongs to the MnmA/TRMU family.

Its subcellular location is the cytoplasm. The enzyme catalyses S-sulfanyl-L-cysteinyl-[protein] + uridine(34) in tRNA + AH2 + ATP = 2-thiouridine(34) in tRNA + L-cysteinyl-[protein] + A + AMP + diphosphate + H(+). Its function is as follows. Catalyzes the 2-thiolation of uridine at the wobble position (U34) of tRNA, leading to the formation of s(2)U34. In Pseudomonas aeruginosa (strain LESB58), this protein is tRNA-specific 2-thiouridylase MnmA.